We begin with the raw amino-acid sequence, 292 residues long: Tyrosine isonitrile desaturase (292 aa).

Residues histidine 110, aspartate 112, and histidine 259 each coordinate Fe cation.

This sequence belongs to the TfdA dioxygenase family. The cofactor is Fe(2+).

It catalyses the reaction (2S)-3-(4-hydroxyphenyl)-2-isocyanopropanoate + 2-oxoglutarate + O2 = (2E)-3-(4-hydroxyphenyl)-2-isocyanoprop-2-enoate + succinate + CO2 + H2O. Its function is as follows. Catalyzes the 2-oxoglutarate-dependent oxidation of tyrosine isonitrile. The protein is Tyrosine isonitrile desaturase of Erwinia amylovora (strain CFBP1430).